The following is an 80-amino-acid chain: WAP four-disulfide core domain protein 15B (80 aa).

Residues 1-20 (MKLLGLSLLAVTILLCCNMA) form the signal peptide. The 48-residue stretch at 29–76 (VFSKPGYCPEYRVPCPFVLIPKCRRDKGCKDALKCCFFYCQMRCVDPW) folds into the WAP domain. 4 disulfides stabilise this stretch: Cys-36–Cys-64, Cys-43–Cys-68, Cys-51–Cys-63, and Cys-57–Cys-72.

In terms of tissue distribution, constitutively expressed in kidney and epididymis.

Its subcellular location is the secreted. Antibacterial protein which inhibits the growth of E.coli and S.aureus. This Mus musculus (Mouse) protein is WAP four-disulfide core domain protein 15B (Wfdc15b).